We begin with the raw amino-acid sequence, 131 residues long: Small ribosomal subunit protein uS8 (131 aa).

Belongs to the universal ribosomal protein uS8 family. As to quaternary structure, part of the 30S ribosomal subunit. Contacts proteins S5 and S12.

Functionally, one of the primary rRNA binding proteins, it binds directly to 16S rRNA central domain where it helps coordinate assembly of the platform of the 30S subunit. The protein is Small ribosomal subunit protein uS8 of Pelagibacter ubique (strain HTCC1062).